The sequence spans 206 residues: HTH-type transcriptional regulator Hpr (206 aa).

Positions 13-157 constitute an HTH marR-type domain; that stretch reads ALLFSQRMAQ…MMSIIRHIYG (145 aa). Residues 63 to 86 constitute a DNA-binding region (H-T-H motif); sequence ISEIAKFGVMHVSTAFNFSKKLEE. Residues 177–206 are disordered; sequence SEEGKMKKKQEAKEAGESIEVDKPLEPLKN. Basic and acidic residues predominate over residues 178 to 206; that stretch reads EEGKMKKKQEAKEAGESIEVDKPLEPLKN.

In terms of assembly, homodimer.

Negative regulator of protease production and sporulation. The protein is HTH-type transcriptional regulator Hpr of Bacillus licheniformis (strain ATCC 14580 / DSM 13 / JCM 2505 / CCUG 7422 / NBRC 12200 / NCIMB 9375 / NCTC 10341 / NRRL NRS-1264 / Gibson 46).